We begin with the raw amino-acid sequence, 300 residues long: Cis-3-alkyl-4-alkyloxetan-2-one decarboxylase (300 aa).

The region spanning Val33 to Asp282 is the AB hydrolase-1 domain.

It belongs to the AB hydrolase superfamily. As to quaternary structure, homotetramer. Forms a complex with OleC and OleD.

It is found in the cytoplasm. The catalysed reaction is a cis-3-alkyl-4-alkyloxetan-2-one = a cis-alkene + CO2. Its function is as follows. Involved in olefin biosynthesis. Catalyzes the elimination of carbon dioxide from beta-lactones to form the final olefin product. The protein is Cis-3-alkyl-4-alkyloxetan-2-one decarboxylase of Xanthomonas campestris pv. campestris (strain ATCC 33913 / DSM 3586 / NCPPB 528 / LMG 568 / P 25).